The primary structure comprises 185 residues: MMYLTYYFIEITIFLAILCTIFIISAKNPMVSILYMIALFVIAAMYLYLIGLGIFSLLYIMIYIGAIAVLFLFIITLLDINSTELSVKSNIRDLPLVLISLIVLTISGLMIYSNDSILINKLLEAFGNDYNTIITQDWFNIENTTLLTTIGNVLLTNNAFILLVLAIVLLLGIIGPISITMKHKE.

5 helical membrane-spanning segments follow: residues Leu4–Ile24, Ile33–Gly53, Ile54–Ile74, Leu94–Asn114, and Ala159–Ile179.

This sequence belongs to the complex I subunit 6 family. Complex I is composed of 37 different subunits.

It localises to the mitochondrion membrane. The catalysed reaction is a ubiquinone + NADH + 5 H(+)(in) = a ubiquinol + NAD(+) + 4 H(+)(out). Functionally, core subunit of the mitochondrial membrane respiratory chain NADH dehydrogenase (Complex I) that is believed to belong to the minimal assembly required for catalysis. Complex I functions in the transfer of electrons from NADH to the respiratory chain. The immediate electron acceptor for the enzyme is believed to be ubiquinone. The polypeptide is NADH-ubiquinone oxidoreductase chain 6 (ND6) (Yarrowia lipolytica (strain CLIB 122 / E 150) (Yeast)).